The following is a 131-amino-acid chain: MKKVMFVCKRNSCRSQMAEGFAKTLGAGKIAVTSCGLESSRVHPTAIAMMEEVGIDISGQTSDPIENFNADDYDVVISLCGCGVNLPPEWVTQEIFEDWQLEDPDGQSLEVFRTVRGQVKERVENLIAKIS.

Catalysis depends on nucleophile residues Cys8 and Cys80. Cystine bridges form between Cys8-Cys80 and Cys80-Cys82.

The protein belongs to the low molecular weight phosphotyrosine protein phosphatase family. As to quaternary structure, homodimer.

The enzyme catalyses O-phospho-L-tyrosyl-[protein] + H2O = L-tyrosyl-[protein] + phosphate. It catalyses the reaction [glutaredoxin]-dithiol + arsenate + glutathione + H(+) = glutathionyl-S-S-[glutaredoxin] + arsenite + H2O. Reduces arsenate [As(V)] to arsenite [As(III)] using glutathione and glutaredoxin as sources of reducing equivalents. GrxA is the most effective electron donor in vivo compared to other glutaredoxins. Constitutes the major arsenate reductase compared to ArsI1 and ArsI2. Also shows weak phosphatase activity toward p-nitrophenyl phosphate. In Synechocystis sp. (strain ATCC 27184 / PCC 6803 / Kazusa), this protein is Glutaredoxin arsenate reductase (arsC).